Here is a 218-residue protein sequence, read N- to C-terminus: Ohanin-like protein (218 aa).

The signal sequence occupies residues 1-40; that stretch reads MSPSAGFQFSLYFLQTKKVLWKLTGLCYILLFTLCFFADQ. Residues 41–48 constitute a propeptide that is removed on maturation; the sequence is ENGGKALA. Positions 49 to 155 constitute a B30.2/SPRY domain; it reads SPPGIWKRAD…RIWQTGLWWL (107 aa). A propeptide spanning residues 156 to 218 is cleaved from the precursor; the sequence is RHLETDPGRV…LGGTVSLTTL (63 aa).

It belongs to the ohanin/vespryn family. As to expression, expressed by the venom gland.

It localises to the secreted. Its function is as follows. Neurotoxin that produces dose-dependent hypolocomotion and hyperalgesia in mice. May directly act on the central nervous system, as it is 6500-fold more potent when administered intracerebroventricularly than intraperitoneal. The polypeptide is Ohanin-like protein (Lachesis muta muta (Bushmaster)).